The chain runs to 250 residues: Cruxrhodopsin-3 (250 aa).

The Extracellular segment spans residues 1–9 (MPAPEGEAI). Residues 10–27 (WLWLGTAGMFLGMLYFIA) traverse the membrane as a helical segment. At 28-41 (RGWGETDSRRQKFY) the chain is on the cytoplasmic side. The chain crosses the membrane as a helical span at residues 42 to 60 (IATILITAIAFVNYLAMAL). Over 61-77 (GFGLTIVEIAGEQRPIY) the chain is Extracellular. Residues 78–94 (WARYSDWLFTTPLLLYD) traverse the membrane as a helical segment. Over 95 to 105 (LGLLAGADRNT) the chain is Cytoplasmic. Residues 106 to 125 (ISSLVSLDVLMIGTGLVATL) traverse the membrane as a helical segment. The Extracellular segment spans residues 126 to 138 (SAGSGVLSAGAER). Residues 139–158 (LVWWGISTAFLLVLLYFLFS) traverse the membrane as a helical segment. The Cytoplasmic portion of the chain corresponds to 159–176 (SLSGRVADLPSDTRSTFK). A helical transmembrane segment spans residues 177–195 (TLRNLVTVVWLVYPVWWLV). Topologically, residues 196–207 (GTEGIGLVGIGI) are extracellular. Residues 208-227 (ETAGFMVIDLVAKVGFGIIL) traverse the membrane as a helical segment. The residue at position 220 (lysine 220) is an N6-(retinylidene)lysine. Residues 228-250 (LRSHGVLDGAAETTGAGATATAD) are Cytoplasmic-facing.

This sequence belongs to the archaeal/bacterial/fungal opsin family. In terms of assembly, homotrimer. Binds bacterioruberin in the crevice between neighboring subunits.

The protein resides in the cell membrane. Functionally, light-driven proton pump. In Haloarcula vallismortis (Halobacterium vallismortis), this protein is Cruxrhodopsin-3 (cop3).